A 361-amino-acid polypeptide reads, in one-letter code: Alternative oxidase, mitochondrial (361 aa).

Residues 156-178 (YLVRNVFLESVAGVPGMVAGMLR) traverse the membrane as a helical segment. Fe cation is bound by residues Glu-164, Glu-203, and His-206. The helical transmembrane segment at 218-240 (WFMRLAVLGAQGVFFNAMFLSYL) threads the bilayer. Fe cation is bound by residues Glu-254, Glu-309, and His-312. A compositionally biased stretch (polar residues) spans 318 to 328 (TLGNLDQNSDP). Residues 318-361 (TLGNLDQNSDPNPYASKYDNPNVPHPRKDIKYLKPSGWEREEVM) form a disordered region. Basic and acidic residues predominate over residues 343–361 (PRKDIKYLKPSGWEREEVM).

This sequence belongs to the alternative oxidase family. Fe cation is required as a cofactor.

It localises to the mitochondrion inner membrane. Functionally, catalyzes cyanide-resistant oxygen consumption. May increase respiration when the cytochrome respiratory pathway is restricted, or in response to low temperatures. The chain is Alternative oxidase, mitochondrial (AOX1) from Venturia inaequalis (Apple scab fungus).